The following is a 183-amino-acid chain: Shikimate kinase (183 aa).

ATP is bound at residue 15–20 (GSGKST). Position 19 (S19) interacts with Mg(2+). Substrate is bound by residues D37, R61, and G85. R123 is a binding site for ATP. Position 142 (R142) interacts with substrate.

Belongs to the shikimate kinase family. Monomer. Mg(2+) is required as a cofactor.

It is found in the cytoplasm. It carries out the reaction shikimate + ATP = 3-phosphoshikimate + ADP + H(+). It participates in metabolic intermediate biosynthesis; chorismate biosynthesis; chorismate from D-erythrose 4-phosphate and phosphoenolpyruvate: step 5/7. Its function is as follows. Catalyzes the specific phosphorylation of the 3-hydroxyl group of shikimic acid using ATP as a cosubstrate. In Paracidovorax citrulli (strain AAC00-1) (Acidovorax citrulli), this protein is Shikimate kinase.